A 309-amino-acid chain; its full sequence is HPr kinase/phosphorylase (309 aa).

Residues H138 and K159 contribute to the active site. 153-160 (GKSGIGKS) serves as a coordination point for ATP. S160 lines the Mg(2+) pocket. Catalysis depends on D177, which acts as the Proton acceptor; for phosphorylation activity. Proton donor; for dephosphorylation activity. Positions 201–210 (IEVRGIGILD) are important for the catalytic mechanism of both phosphorylation and dephosphorylation. E202 serves as a coordination point for Mg(2+). The active site involves R243. The interval 264–269 (PIKPAR) is important for the catalytic mechanism of dephosphorylation.

The protein belongs to the HPrK/P family. As to quaternary structure, homohexamer. The cofactor is Mg(2+).

It carries out the reaction [HPr protein]-L-serine + ATP = [HPr protein]-O-phospho-L-serine + ADP + H(+). The catalysed reaction is [HPr protein]-O-phospho-L-serine + phosphate + H(+) = [HPr protein]-L-serine + diphosphate. In terms of biological role, catalyzes the ATP- as well as the pyrophosphate-dependent phosphorylation of a specific serine residue in HPr, a phosphocarrier protein of the phosphoenolpyruvate-dependent sugar phosphotransferase system (PTS). HprK/P also catalyzes the pyrophosphate-producing, inorganic phosphate-dependent dephosphorylation (phosphorolysis) of seryl-phosphorylated HPr (P-Ser-HPr). The two antagonistic activities of HprK/P are regulated by several intracellular metabolites, which change their concentration in response to the absence or presence of rapidly metabolisable carbon sources (glucose, fructose, etc.) in the growth medium. Therefore, by controlling the phosphorylation state of HPr, HPrK/P is a sensor enzyme that plays a major role in the regulation of carbon metabolism and sugar transport: it mediates carbon catabolite repression (CCR), and regulates PTS-catalyzed carbohydrate uptake and inducer exclusion. This Alkaliphilus metalliredigens (strain QYMF) protein is HPr kinase/phosphorylase.